The sequence spans 252 residues: CLAVATA3/ESR (CLE)-related protein 4A-2 (252 aa).

Residues 1-21 (MAKNAMLCLLILRVVLALAFA) form the signal peptide. A required for secretion from the host cytoplasm to the host apoplasm region spans residues 21–83 (ATNKKGDEEP…SNQLPNNNWM (63 aa)). Asn32 carries an N-linked (GlcNAc...) asparagine glycan. Residues 116–252 (RKTGMHSQRH…APAGPDPIHH (137 aa)) form a disordered region. Composition is skewed to basic and acidic residues over residues 125 to 137 (HHEE…EKRV), 144 to 179 (PIHH…EKRV), 186 to 200 (PIHH…EKRA), and 207 to 242 (PTHH…EKRG). The A-1 repeat unit spans residues 127 to 135 (EETTLEQEK). The segment at 127–219 (EETTLEQEKR…HEETTLEQEK (93 aa)) is 6 X approximate repeat A. One copy of the CLE-1 repeat lies at 136–147 (RVAGAGPDPIHH). A 6 X approximate repeat CLE region spans residues 136 to 252 (RVAGAGPDPI…APAGPDPIHH (117 aa)). The A-2 repeat unit spans residues 148-156 (QDTTLEQEK). The CLE-2 repeat unit spans residues 157–168 (RAVPAGPDPKHH). Residues 169–177 (EETTLEQEK) form an A-3 repeat. A CLE-3 repeat occupies 178–189 (RVAGAGPDPIHH). An A-4 repeat occupies 190-198 (QDTTLEQEK). Residues 199 to 210 (RAVPAGPDPTHH) form a CLE-4 repeat. One copy of the A-5 repeat lies at 211-219 (EETTLEQEK). The CLE-5 repeat unit spans residues 220–231 (RAVPAGPDPKHH). Residues 232–240 (EETTFEQEK) form an A-6 repeat. Residues 241-252 (RGAPAGPDPIHH) form a CLE-6 repeat.

It belongs to the CLV3/ESR signal peptide family. Highly expressed exclusively within the dorsal esophageal gland cell during syncytium formation in host plants.

The protein resides in the secreted. It is found in the host cytoplasm. The protein localises to the host extracellular space. Its subcellular location is the extracellular space. It localises to the apoplast. Mimics host plant CLE extracellular signal peptides that regulate cell fate. May play a role in the differentiation or division of feeding cells (syncytia) induced in plant roots during infection. This Globodera rostochiensis (Golden nematode worm) protein is CLAVATA3/ESR (CLE)-related protein 4A-2 (CLE-4A-2).